The following is a 67-amino-acid chain: Large ribosomal subunit protein bL32 (67 aa).

Residues 1 to 19 show a composition bias toward basic residues; it reads MAVPKRKMSRSNTRSRRSQ. The disordered stretch occupies residues 1-22; that stretch reads MAVPKRKMSRSNTRSRRSQWKA.

It belongs to the bacterial ribosomal protein bL32 family.

This chain is Large ribosomal subunit protein bL32, found in Kineococcus radiotolerans (strain ATCC BAA-149 / DSM 14245 / SRS30216).